The chain runs to 178 residues: Mediator of RNA polymerase II transcription subunit 28 (178 aa).

The disordered stretch occupies residues 1–43 (MAASLGGMFAGQPPGPPPPPPGLPGQASLLQAAPGAPRPSNST). Residues 13-23 (PPGPPPPPPGL) are compositionally biased toward pro residues. Residues 109–145 (QVIKEDVSELRSELQRKDALVQKHLTKLRHWQQVLED) are a coiled coil.

Belongs to the Mediator complex subunit 28 family. In terms of assembly, forms a ternary complex with NF2/merlin and GRB2. Binds to actin. Component of the Mediator complex, which is probably composed of MED1, MED4, MED6, MED7, MED8, MED9, MED10, MED11, MED12, MED13, MED13L, MED14, MED15, MED16, MED17, MED18, MED19, MED20, MED21, MED22, MED23, MED24, MED25, MED26, MED27, MED29, MED30, MED31, CCNC, CDK8 and CDC2L6/CDK11. The MED12, MED13, CCNC and CDK8 subunits form a distinct module termed the CDK8 module. Mediator containing the CDK8 module is less active than Mediator lacking this module in supporting transcriptional activation. Individual preparations of the Mediator complex lacking one or more distinct subunits have been variously termed ARC, CRSP, DRIP, PC2, SMCC and TRAP.

Its subcellular location is the nucleus. The protein resides in the cytoplasm. It localises to the membrane. Functionally, may be part of a complex containing NF2/merlin that participates in cellular signaling to the actin cytoskeleton downstream of tyrosine kinase signaling pathways. Component of the Mediator complex, a coactivator involved in the regulated transcription of nearly all RNA polymerase II-dependent genes. Mediator functions as a bridge to convey information from gene-specific regulatory proteins to the basal RNA polymerase II transcription machinery. Mediator is recruited to promoters by direct interactions with regulatory proteins and serves as a scaffold for the assembly of a functional preinitiation complex with RNA polymerase II and the general transcription factors. This is Mediator of RNA polymerase II transcription subunit 28 (Med28) from Rattus norvegicus (Rat).